The chain runs to 359 residues: Nicotinate-nucleotide--dimethylbenzimidazole phosphoribosyltransferase (359 aa).

E318 (proton acceptor) is an active-site residue.

The protein belongs to the CobT family. As to quaternary structure, homodimer.

It carries out the reaction 5,6-dimethylbenzimidazole + nicotinate beta-D-ribonucleotide = alpha-ribazole 5'-phosphate + nicotinate + H(+). The protein operates within nucleoside biosynthesis; alpha-ribazole biosynthesis; alpha-ribazole from 5,6-dimethylbenzimidazole: step 1/2. Its function is as follows. Catalyzes the synthesis of alpha-ribazole-5'-phosphate from nicotinate mononucleotide (NAMN) and 5,6-dimethylbenzimidazole (DMB). In Shigella sonnei (strain Ss046), this protein is Nicotinate-nucleotide--dimethylbenzimidazole phosphoribosyltransferase.